Consider the following 112-residue polypeptide: Mediator of RNA polymerase II transcription subunit 22 (112 aa).

The segment at Lys83–Ala112 is disordered. Residues Leu96–Ala112 are compositionally biased toward basic and acidic residues.

This sequence belongs to the Mediator complex subunit 22 family. Component of the Mediator complex.

The protein localises to the nucleus. Functionally, component of the Mediator complex, a coactivator involved in the regulated transcription of nearly all RNA polymerase II-dependent genes. Mediator functions as a bridge to convey information from gene-specific regulatory proteins to the basal RNA polymerase II transcription machinery. Mediator is recruited to promoters by direct interactions with regulatory proteins and serves as a scaffold for the assembly of a functional preinitiation complex with RNA polymerase II and the general transcription factors. The polypeptide is Mediator of RNA polymerase II transcription subunit 22 (SRB6) (Yarrowia lipolytica (strain CLIB 122 / E 150) (Yeast)).